The sequence spans 470 residues: Cyclin-dependent kinase E-1 (470 aa).

In terms of domain architecture, Protein kinase spans 25 to 333; it reads YNLVGKIGEG…ASQALEHEYF (309 aa). Residues 31–39 and lysine 55 each bind ATP; that span reads IGEGTYGLV. Residue tyrosine 36 is modified to Phosphotyrosine. Catalysis depends on aspartate 154, which acts as the Proton acceptor. The disordered stretch occupies residues 428 to 470; the sequence is LNPSVPLQQQRGMAQPHQQQQLRRKDPGMGMSGYAPPNKSRRL. Residues 432–448 show a composition bias toward polar residues; that stretch reads VPLQQQRGMAQPHQQQQ.

This sequence belongs to the protein kinase superfamily. CMGC Ser/Thr protein kinase family. CDC2/CDKX subfamily. Interacts with MED14, HDA19 and LUG. Interacts with KIN10. In terms of tissue distribution, expressed in roots, leaves and stems. Expressed in young dividing tissue, such as shoot and root tips, lateral root primordia, young leaves and flowers. Expressed in the inflorescence meristem, inflorescence stem and young flowers.

It is found in the nucleus. The enzyme catalyses L-seryl-[protein] + ATP = O-phospho-L-seryl-[protein] + ADP + H(+). It carries out the reaction L-threonyl-[protein] + ATP = O-phospho-L-threonyl-[protein] + ADP + H(+). The catalysed reaction is [DNA-directed RNA polymerase] + ATP = phospho-[DNA-directed RNA polymerase] + ADP + H(+). Functionally, involved in cell differentiation. Required for the specification of stamen and carpel identities and for the proper termination of stem cells in the floral meristem. The sequence is that of Cyclin-dependent kinase E-1 (CDKE-1) from Arabidopsis thaliana (Mouse-ear cress).